Consider the following 125-residue polypeptide: Large ribosomal subunit protein bL12 (125 aa).

It belongs to the bacterial ribosomal protein bL12 family. Homodimer. Part of the ribosomal stalk of the 50S ribosomal subunit. Forms a multimeric L10(L12)X complex, where L10 forms an elongated spine to which 2 to 4 L12 dimers bind in a sequential fashion. Binds GTP-bound translation factors.

Its function is as follows. Forms part of the ribosomal stalk which helps the ribosome interact with GTP-bound translation factors. Is thus essential for accurate translation. The sequence is that of Large ribosomal subunit protein bL12 from Polaromonas naphthalenivorans (strain CJ2).